The sequence spans 116 residues: CDKN2AIP N-terminal-like protein (116 aa).

N-acetylmethionine is present on Met1. The XRN2-binding (XTBD) domain maps to 24 to 116 (AEQFRSYSES…RSELMKKHQS (93 aa)).

Belongs to the CARF family. Interacts with XRN2; the interaction is direct.

The chain is CDKN2AIP N-terminal-like protein (CDKN2AIPNL) from Bos taurus (Bovine).